The sequence spans 287 residues: (S)-phenoxypropionate/alpha-ketoglutarate-dioxygenase (287 aa).

Residues H102 and D104 each coordinate Fe cation. 2-oxoglutarate contacts are provided by T129 and W242. Position 257 (H257) interacts with Fe cation. R268 serves as a coordination point for 2-oxoglutarate.

Belongs to the TfdA dioxygenase family. As to quaternary structure, monomer. Fe cation is required as a cofactor. It depends on L-ascorbate as a cofactor.

The enzyme catalyses (S)-2-(4-chloro-2-methylphenoxy)propanoate + 2-oxoglutarate + O2 = 2-methyl-4-chlorophenol + pyruvate + succinate + CO2. It carries out the reaction (S)-(2,4-dichlorophenoxy)propanoate + 2-oxoglutarate + O2 = 2,4-dichlorophenol + pyruvate + succinate + CO2. It functions in the pathway xenobiotic degradation; 2-(2,4-dichlorophenoxy)propanoate degradation. In terms of biological role, involved in the degradation of the phenoxypropionate herbicides. Catalyzes the enantiospecific cleavage of the ether bond in the herbicid S-dichlorprop ((S)-2-(2,4-dichlorophenoxy)propionate)(S-2,4-DP) and S-mecoprop ((S)-2-(4-chloro-2-methylphenoxy)propionate)(S-2,4-MCPP). It can also accept (RS)-2-(4-chloro-2-methylphenoxy)propionate ((RS)-2,4-MCPP) and phenoxyacetate derivatives such as 2,4-dichlorophenoxyacetate (2,4-D), however it can only accept 2-oxoglutarate as oxygen acceptor. The chain is (S)-phenoxypropionate/alpha-ketoglutarate-dioxygenase from Sphingobium herbicidovorans (strain ATCC 700291 / DSM 11019 / CCUG 56400 / KCTC 2939 / LMG 18315 / NBRC 16415 / MH) (Sphingomonas herbicidovorans).